A 399-amino-acid chain; its full sequence is Bombesin receptor subtype-3 (399 aa).

Residues 1–41 (MSQRQPQSPNQTLISITNDTETSSSAVSNDTTPKGWTGDNS) are Extracellular-facing. N-linked (GlcNAc...) asparagine glycosylation is found at Asn-10, Asn-18, and Asn-29. Residues 42-63 (PGIEALCAIYITYAVIISVGIL) form a helical membrane-spanning segment. The Cytoplasmic segment spans residues 64-82 (GNAILIKVFFKTKSMQTVP). Residues 83-103 (NIFITSLAFGDLLLLLTCVPV) form a helical membrane-spanning segment. Topologically, residues 104–121 (DATHYLAEGWLFGKVGCK) are extracellular. Cys-120 and Cys-203 are disulfide-bonded. Residues 122 to 143 (VLSFIRLTSVGVSVFTLTILSA) form a helical membrane-spanning segment. Over 144–163 (DRYKAVVKPLERQPSNAILK) the chain is Cytoplasmic. A helical membrane pass occupies residues 164-184 (TCAKAGGIWIMAMIFALPEAI). Over 185-220 (FSNVYTFQDPNRNVTFESCNSYPISERLLQEIHSLL) the chain is Extracellular. The chain crosses the membrane as a helical span at residues 221–241 (CFLVFYIIPLSIISVYYSLIA). Residues 242-272 (RTLYKSTLNIPTEEQSHARKQIESRKRIAKT) lie on the Cytoplasmic side of the membrane. Residues 273 to 293 (VLVLVALFALCWLPNHLLYLY) traverse the membrane as a helical segment. Topologically, residues 294-313 (HSFTYESYAEPSDVPFVVTI) are extracellular. Residues 314 to 333 (FSRVLAFSNSCVNPFALYWL) form a helical membrane-spanning segment. The Cytoplasmic portion of the chain corresponds to 334 to 399 (SKTFQKHFKA…STAKKGEDKV (66 aa)). Residue Cys-347 is the site of S-palmitoyl cysteine attachment.

It belongs to the G-protein coupled receptor 1 family. As to quaternary structure, interacts with C6orf89.

It localises to the cell membrane. In terms of biological role, role in sperm cell division, maturation, or function. This receptor mediates its action by association with G proteins that activate a phosphatidylinositol-calcium second messenger system. This chain is Bombesin receptor subtype-3 (Brs3), found in Rattus norvegicus (Rat).